The following is a 77-amino-acid chain: DNA-directed RNA polymerase subunit epsilon (77 aa).

Belongs to the RNA polymerase subunit epsilon family. As to quaternary structure, RNAP is composed of a core of 2 alpha, a beta and a beta' subunit. The core is associated with a delta subunit, and at least one of epsilon or omega. When a sigma factor is associated with the core the holoenzyme is formed, which can initiate transcription.

It catalyses the reaction RNA(n) + a ribonucleoside 5'-triphosphate = RNA(n+1) + diphosphate. Its function is as follows. A non-essential component of RNA polymerase (RNAP). The sequence is that of DNA-directed RNA polymerase subunit epsilon from Streptococcus pneumoniae serotype 2 (strain D39 / NCTC 7466).